Consider the following 210-residue polypeptide: Small ribosomal subunit protein uS5 (210 aa).

A compositionally biased stretch (polar residues) spans 1 to 11 (MTQPNTQTTPN). A disordered region spans residues 1–56 (MTQPNTQTTPNDVPAAAEGQHQEQQQQQRRGGGRERRGGGRRGDRRGQERDSEWQE). A compositionally biased stretch (low complexity) spans 18–29 (EGQHQEQQQQQR). A compositionally biased stretch (basic and acidic residues) spans 32–56 (GGRERRGGGRRGDRRGQERDSEWQE). An S5 DRBM domain is found at 54-117 (WQERVVQIRR…ADGKKHLVKV (64 aa)).

Belongs to the universal ribosomal protein uS5 family. As to quaternary structure, part of the 30S ribosomal subunit. Contacts proteins S4 and S8.

In terms of biological role, with S4 and S12 plays an important role in translational accuracy. Functionally, located at the back of the 30S subunit body where it stabilizes the conformation of the head with respect to the body. This Prochlorococcus marinus (strain MIT 9303) protein is Small ribosomal subunit protein uS5.